The primary structure comprises 357 residues: Membrane-bound lytic murein transglycosylase C (357 aa).

Positions 1 to 16 (MKKMLALLVIAPLLVS) are cleaved as a signal peptide. The N-palmitoyl cysteine moiety is linked to residue Cys17. A lipid anchor (S-diacylglycerol cysteine) is attached at Cys17.

The protein belongs to the transglycosylase Slt family.

Its subcellular location is the cell outer membrane. It carries out the reaction Exolytic cleavage of the (1-&gt;4)-beta-glycosidic linkage between N-acetylmuramic acid (MurNAc) and N-acetylglucosamine (GlcNAc) residues in peptidoglycan, from either the reducing or the non-reducing ends of the peptidoglycan chains, with concomitant formation of a 1,6-anhydrobond in the MurNAc residue.. Murein-degrading enzyme. May play a role in recycling of muropeptides during cell elongation and/or cell division. This chain is Membrane-bound lytic murein transglycosylase C, found in Pectobacterium atrosepticum (strain SCRI 1043 / ATCC BAA-672) (Erwinia carotovora subsp. atroseptica).